The following is a 253-amino-acid chain: Probable U3 small nucleolar RNA-associated protein 11 (253 aa).

Positions 1-26 (MAAAFRKAAKSRQREHRERSQPGFRK) are disordered. Residues Lys74, Lys83, and Lys86 each participate in a glycyl lysine isopeptide (Lys-Gly) (interchain with G-Cter in SUMO2) cross-link. Thr90 bears the Phosphothreonine mark. Glycyl lysine isopeptide (Lys-Gly) (interchain with G-Cter in SUMO2) cross-links involve residues Lys103, Lys120, Lys143, Lys144, Lys180, Lys211, Lys218, Lys235, and Lys236. Phosphoserine is present on Ser241. A Glycyl lysine isopeptide (Lys-Gly) (interchain with G-Cter in SUMO2) cross-link involves residue Lys246.

This sequence belongs to the UTP11 family. Part of the small subunit (SSU) processome, composed of more than 70 proteins and the RNA chaperone small nucleolar RNA (snoRNA) U3.

The protein resides in the nucleus. It localises to the nucleolus. Part of the small subunit (SSU) processome, first precursor of the small eukaryotic ribosomal subunit. During the assembly of the SSU processome in the nucleolus, many ribosome biogenesis factors, an RNA chaperone and ribosomal proteins associate with the nascent pre-rRNA and work in concert to generate RNA folding, modifications, rearrangements and cleavage as well as targeted degradation of pre-ribosomal RNA by the RNA exosome. Involved in nucleolar processing of pre-18S ribosomal RNA. This is Probable U3 small nucleolar RNA-associated protein 11 from Homo sapiens (Human).